The sequence spans 299 residues: 4-diphosphocytidyl-2-C-methyl-D-erythritol kinase (299 aa).

Residue lysine 20 is part of the active site. 106-116 contributes to the ATP binding site; that stretch reads PMGGGLGGGSS. The active site involves aspartate 148.

The protein belongs to the GHMP kinase family. IspE subfamily. As to quaternary structure, homodimer.

The catalysed reaction is 4-CDP-2-C-methyl-D-erythritol + ATP = 4-CDP-2-C-methyl-D-erythritol 2-phosphate + ADP + H(+). It functions in the pathway isoprenoid biosynthesis; isopentenyl diphosphate biosynthesis via DXP pathway; isopentenyl diphosphate from 1-deoxy-D-xylulose 5-phosphate: step 3/6. Catalyzes the phosphorylation of the position 2 hydroxy group of 4-diphosphocytidyl-2C-methyl-D-erythritol. This chain is 4-diphosphocytidyl-2-C-methyl-D-erythritol kinase, found in Yersinia pseudotuberculosis serotype O:1b (strain IP 31758).